Here is a 418-residue protein sequence, read N- to C-terminus: L-rhamnose isomerase (418 aa).

H261, D293, and D295 together coordinate Mn(2+).

The protein belongs to the rhamnose isomerase family. It depends on Mn(2+) as a cofactor.

It localises to the cytoplasm. It catalyses the reaction L-rhamnopyranose = L-rhamnulose. The protein operates within carbohydrate degradation; L-rhamnose degradation; glycerone phosphate from L-rhamnose: step 1/3. In terms of biological role, catalyzes the interconversion of L-rhamnose and L-rhamnulose. This is L-rhamnose isomerase from Clostridium beijerinckii (strain ATCC 51743 / NCIMB 8052) (Clostridium acetobutylicum).